The sequence spans 170 residues: Peptide deformylase (170 aa).

The Fe cation site is built by cysteine 88 and histidine 130. The active site involves glutamate 131. A Fe cation-binding site is contributed by histidine 134.

The protein belongs to the polypeptide deformylase family. Requires Fe(2+) as cofactor.

The enzyme catalyses N-terminal N-formyl-L-methionyl-[peptide] + H2O = N-terminal L-methionyl-[peptide] + formate. Removes the formyl group from the N-terminal Met of newly synthesized proteins. Requires at least a dipeptide for an efficient rate of reaction. N-terminal L-methionine is a prerequisite for activity but the enzyme has broad specificity at other positions. The protein is Peptide deformylase of Acetivibrio thermocellus (strain ATCC 27405 / DSM 1237 / JCM 9322 / NBRC 103400 / NCIMB 10682 / NRRL B-4536 / VPI 7372) (Clostridium thermocellum).